Reading from the N-terminus, the 238-residue chain is Small ribosomal subunit protein eS4 (238 aa).

Residues L38–A101 enclose the S4 RNA-binding domain.

It belongs to the eukaryotic ribosomal protein eS4 family.

The protein is Small ribosomal subunit protein eS4 of Pyrobaculum aerophilum (strain ATCC 51768 / DSM 7523 / JCM 9630 / CIP 104966 / NBRC 100827 / IM2).